The chain runs to 1055 residues: Bifunctional fucokinase/GDP-fucose pyrophosphorylase (1055 aa).

The segment at 34–565 (WDAIVLTAAS…SSQRVSLEEL (532 aa)) is GDP-fucose pyrophosphorylase. The L-fucokinase stretch occupies residues 693 to 1055 (GKSHSENHIS…VKVYNWSICI (363 aa)). 826 to 836 (PRGSGLGTSSI) serves as a coordination point for ATP.

This sequence belongs to the GHMP kinase family. Requires Mn(2+) as cofactor. It depends on Mg(2+) as a cofactor. In terms of tissue distribution, ubiquitous. Highest expression in flower buds.

The enzyme catalyses L-fucose + ATP = beta-L-fucose 1-phosphate + ADP + H(+). The catalysed reaction is beta-L-fucose 1-phosphate + GTP + H(+) = GDP-beta-L-fucose + diphosphate. Its function is as follows. Bifunctional enzyme involved in the salvage pathway which converts free L-fucose to GDP-L-fucose. Catalyzes two successive reactions, the ATP-dependent phosphorylation of L-fucose to L-fucose 1-phosphate, and its guanylylation to GDP-L-fucose. The sugar-1-kinase activity has a strict substrate specificity for L-fucose and ATP. The pyrophosphorylase activity has a strict substrate specificity for L-fucose 1-phosphate and GTP. This is Bifunctional fucokinase/GDP-fucose pyrophosphorylase (FKGP) from Arabidopsis thaliana (Mouse-ear cress).